The chain runs to 945 residues: Soluble guanylate cyclase gcy-33 (945 aa).

His104 contacts heme. The stretch at 388-413 forms a coiled coil; that stretch reads SEVLTEMTREISEAKKTARTLLTQMM. The region spanning 437–567 is the Guanylate cyclase domain; it reads SIGFIRVCDF…DTVNTASRME (131 aa). 2 disordered regions span residues 639 to 679 and 706 to 930; these read KEAE…LSGS and QDEN…KCED. A compositionally biased stretch (low complexity) spans 661 to 679; it reads SLGESIDSSSSRRGSLSGS. The segment covering 711–720 has biased composition (polar residues); sequence RPPTWSASHS. Basic and acidic residues predominate over residues 721 to 731; sequence QDIRKPRKTES. A compositionally biased stretch (polar residues) spans 732-744; sequence KITLNSRLSSSDL. Composition is skewed to basic and acidic residues over residues 750–759 and 766–804; these read ETSKDSDGET and ELKEVNRIREEALAQEKEEERTTKEENQKIEEVGEDHVS. The stretch at 763–802 forms a coiled coil; the sequence is TSSELKEVNRIREEALAQEKEEERTTKEENQKIEEVGEDH. Residues 817-828 show a composition bias toward polar residues; sequence GDNNISFSQMPS. Basic and acidic residues predominate over residues 851–861; that stretch reads ISKKKLEKEDS. Polar residues predominate over residues 862 to 884; that stretch reads NSSMSSLDERTTVSAKPTTTRRL. Positions 886–896 are enriched in basic and acidic residues; it reads NQKDLEKEKKR. Low complexity predominate over residues 898 to 911; the sequence is SMAGSSVTSSSAHS. Positions 916–930 are enriched in basic and acidic residues; sequence SKKDTRDKSRCKCED.

Belongs to the adenylyl cyclase class-4/guanylyl cyclase family. Heterodimer; with other soluble guanylate cyclases. The cofactor is heme. As to expression, expressed in BAG sensory neuron.

Its subcellular location is the cytoplasm. The catalysed reaction is GTP = 3',5'-cyclic GMP + diphosphate. Its activity is regulated as follows. May be regulated by molecular oxygen. Probably not activated by nitric oxide (NO). Synthesizes cyclic GMP (cGMP) from GTP. May be involved in sensitivity to quinine by regulating egl-4 activity through the production of cGMP. In Caenorhabditis elegans, this protein is Soluble guanylate cyclase gcy-33 (gcy-33).